Here is a 396-residue protein sequence, read N- to C-terminus: Carbamoyl phosphate synthase small chain (396 aa).

The CPSase stretch occupies residues Met1–Lys204. The L-glutamine site is built by Ser59, Gly256, and Gly258. The Glutamine amidotransferase type-1 domain occupies Asn208–Ala396. The active-site Nucleophile is the Cys285. L-glutamine is bound by residues Leu286, Gln289, Asn327, Gly329, and Phe330. Residues His369 and Glu371 contribute to the active site.

Belongs to the CarA family. As to quaternary structure, composed of two chains; the small (or glutamine) chain promotes the hydrolysis of glutamine to ammonia, which is used by the large (or ammonia) chain to synthesize carbamoyl phosphate. Tetramer of heterodimers (alpha,beta)4.

It carries out the reaction hydrogencarbonate + L-glutamine + 2 ATP + H2O = carbamoyl phosphate + L-glutamate + 2 ADP + phosphate + 2 H(+). It catalyses the reaction L-glutamine + H2O = L-glutamate + NH4(+). The protein operates within amino-acid biosynthesis; L-arginine biosynthesis; carbamoyl phosphate from bicarbonate: step 1/1. It functions in the pathway pyrimidine metabolism; UMP biosynthesis via de novo pathway; (S)-dihydroorotate from bicarbonate: step 1/3. In terms of biological role, small subunit of the glutamine-dependent carbamoyl phosphate synthetase (CPSase). CPSase catalyzes the formation of carbamoyl phosphate from the ammonia moiety of glutamine, carbonate, and phosphate donated by ATP, constituting the first step of 2 biosynthetic pathways, one leading to arginine and/or urea and the other to pyrimidine nucleotides. The small subunit (glutamine amidotransferase) binds and cleaves glutamine to supply the large subunit with the substrate ammonia. The chain is Carbamoyl phosphate synthase small chain from Bradyrhizobium diazoefficiens (strain JCM 10833 / BCRC 13528 / IAM 13628 / NBRC 14792 / USDA 110).